We begin with the raw amino-acid sequence, 491 residues long: GTPase Der (491 aa).

EngA-type G domains are found at residues 54 to 217 (PVLA…PEYS) and 229 to 402 (RRIA…ESWD). Residues 60-67 (GRPNVGKS), 107-111 (DTGGW), 169-172 (NKVD), 235-242 (GRPNVGKS), 282-286 (DTAGI), and 347-350 (NKWD) each bind GTP. One can recognise a KH-like domain in the interval 403–485 (RRIPTGRLNA…PIEVNMRVRE (83 aa)).

This sequence belongs to the TRAFAC class TrmE-Era-EngA-EngB-Septin-like GTPase superfamily. EngA (Der) GTPase family. As to quaternary structure, associates with the 50S ribosomal subunit.

Functionally, GTPase that plays an essential role in the late steps of ribosome biogenesis. The polypeptide is GTPase Der (Paenarthrobacter aurescens (strain TC1)).